A 653-amino-acid polypeptide reads, in one-letter code: Eukaryotic translation initiation factor 4E-binding protein Mextli (653 aa).

The region spanning 227–292 (YCKDEVVIRN…DKINYAKQLM (66 aa)) is the KH domain. Disordered regions lie at residues 311-335 (VGGS…TPTG) and 515-570 (EGDD…AGTN). Low complexity-rich tracts occupy residues 314–323 (SCSSLNSSNS) and 525–536 (SNGGSSTSNQNG). Residues 546–563 (SRKESTPETKGAREKGDL) are compositionally biased toward basic and acidic residues.

As to quaternary structure, interacts with eukaryotic translation initiation factor eIF4E1. Also interacts with eukaryotic translation initiation factor 3 complex members eif3-S9/eif3b, Int6/eif3e and eIF-3p40/eif3h and with CG3225.

Its subcellular location is the cytoplasm. It localises to the cytoplasmic ribonucleoprotein granule. Functionally, plays a role in promoting translation. In Drosophila melanogaster (Fruit fly), this protein is Eukaryotic translation initiation factor 4E-binding protein Mextli.